The following is a 545-amino-acid chain: Probable acyl-activating enzyme 4 (545 aa).

This sequence belongs to the ATP-dependent AMP-binding enzyme family. As to expression, expressed in roots, leaves, stems, flowers and developing seeds.

Functionally, may act as an acid--thiol ligase that activates carboxylic acids by forming acyl-CoAs. This is Probable acyl-activating enzyme 4 (AEE4) from Arabidopsis thaliana (Mouse-ear cress).